A 384-amino-acid chain; its full sequence is Probable 2-heptyl-3-hydroxy-4(1H)-quinolone synthase AqdB2 (384 aa).

It belongs to the 3-hydroxybenzoate 6-hydroxylase family.

The catalysed reaction is 2-heptyl-4(1H)-quinolone + NADH + O2 + H(+) = 2-heptyl-3-hydroxy-4(1H)-quinolone + NAD(+) + H2O. Involved in the degradation of the Pseudomonas aeruginosa quorum sensing signal molecule HHQ (2-heptyl-4-quinolone) to anthranilic acid. Probably catalyzes the hydroxylation of HHQ to PQS (2-heptyl-3-hydroxy-4-quinolone). The protein is Probable 2-heptyl-3-hydroxy-4(1H)-quinolone synthase AqdB2 of Rhodococcus erythropolis (Arthrobacter picolinophilus).